We begin with the raw amino-acid sequence, 402 residues long: Cytochrome b561 and DOMON domain-containing protein At4g17280 (402 aa).

An N-terminal signal peptide occupies residues 1-31; that stretch reads MSNHMSIMKFLNQILCLSLILSISMTTLSFA. The DOMON domain occupies 54 to 171; that stretch reads LDSFLHYTYE…GTINTVWQDG (118 aa). Residues 183–379 form the Cytochrome b561 domain; the sequence is TSGNNVRSVS…LEAFTWYVVI (197 aa). A run of 2 helical transmembrane segments spans residues 218–238 and 250–270; these read IHGILNGVSWGIMMPLGAIIA and AWFYIHVFCQASAYIIGVAGW. Residues H219, H255, and H288 each contribute to the heme b site. The chain crosses the membrane as a helical span at residues 290–310; the sequence is AIGIALFSLATVQVFAMFLRP. H324 is a binding site for heme b. A run of 2 helical transmembrane segments spans residues 326–346 and 359–379; these read TIGYTIIILGVVNVFKGLGIL and IIVVLAIVATLLEAFTWYVVI.

It depends on heme b as a cofactor.

It localises to the membrane. Functionally, may act as a catecholamine-responsive trans-membrane electron transporter. This chain is Cytochrome b561 and DOMON domain-containing protein At4g17280, found in Arabidopsis thaliana (Mouse-ear cress).